Consider the following 79-residue polypeptide: Sulfur carrier protein TusA (79 aa).

C16 functions as the Cysteine persulfide intermediate in the catalytic mechanism.

The protein belongs to the sulfur carrier protein TusA family.

It is found in the cytoplasm. Its function is as follows. Sulfur carrier protein which probably makes part of a sulfur-relay system. This is Sulfur carrier protein TusA from Pseudomonas paraeruginosa (strain DSM 24068 / PA7) (Pseudomonas aeruginosa (strain PA7)).